The sequence spans 416 residues: Tryptophan synthase beta chain (416 aa).

K109 carries the N6-(pyridoxal phosphate)lysine modification.

Belongs to the TrpB family. Tetramer of two alpha and two beta chains. The cofactor is pyridoxal 5'-phosphate.

The enzyme catalyses (1S,2R)-1-C-(indol-3-yl)glycerol 3-phosphate + L-serine = D-glyceraldehyde 3-phosphate + L-tryptophan + H2O. It participates in amino-acid biosynthesis; L-tryptophan biosynthesis; L-tryptophan from chorismate: step 5/5. Functionally, the beta subunit is responsible for the synthesis of L-tryptophan from indole and L-serine. In Synechococcus sp. (strain WH7803), this protein is Tryptophan synthase beta chain.